Reading from the N-terminus, the 220-residue chain is MKPDIKICGLKTPETLERVVRRGASHVGFIFFEKSPRYIEPDLAGRLAEAARGAAKVVAVTVDADNDYLDEIVDLVRPDILQLHGSESPERLLHIKALYGLPVMKAISIRDAADLAKIEPYIGIADRFLLDAKAPAGSDLPGGNGVSFDWTILRSLDESVDYMLSGGLNKDNVAEALAETRASGLDLSSGVESAPGVKDLSKIDAFFDVVNDWSKGPKGA.

Belongs to the TrpF family.

The catalysed reaction is N-(5-phospho-beta-D-ribosyl)anthranilate = 1-(2-carboxyphenylamino)-1-deoxy-D-ribulose 5-phosphate. It participates in amino-acid biosynthesis; L-tryptophan biosynthesis; L-tryptophan from chorismate: step 3/5. This chain is N-(5'-phosphoribosyl)anthranilate isomerase, found in Agrobacterium fabrum (strain C58 / ATCC 33970) (Agrobacterium tumefaciens (strain C58)).